Reading from the N-terminus, the 121-residue chain is MALNIENIVAELENATILELSELVKAIEEKFDVTAAAPVAAAAGAGEAAAAKDSFDVELTAAGDKKVAVIKEVRGITGLGLKEAKELVDGAPTVVKEGLSESEANEIKEKLEAAGASITLK.

This sequence belongs to the bacterial ribosomal protein bL12 family. As to quaternary structure, homodimer. Part of the ribosomal stalk of the 50S ribosomal subunit. Forms a multimeric L10(L12)X complex, where L10 forms an elongated spine to which 2 to 4 L12 dimers bind in a sequential fashion. Binds GTP-bound translation factors.

In terms of biological role, forms part of the ribosomal stalk which helps the ribosome interact with GTP-bound translation factors. Is thus essential for accurate translation. The protein is Large ribosomal subunit protein bL12 of Lactococcus lactis subsp. cremoris (strain MG1363).